Reading from the N-terminus, the 342-residue chain is 29 kDa ribonucleoprotein, chloroplastic (342 aa).

The N-terminal 65 residues, 1-65, are a transit peptide targeting the chloroplast; that stretch reads MSASASSLSA…PAEYPSRFVR (65 aa). An RRM 1 domain is found at 99 to 177; sequence LKLFVGNLSF…RPLRVNAGPP (79 aa). Ser-107 and Ser-204 each carry phosphoserine. The segment at 167 to 255 is disordered; it reads GRPLRVNAGP…GSGSGSGSGS (89 aa). The interval 178-256 is linker (Gly-rich); that stretch reads PPKREESFSR…SGSGSGSGSG (79 aa). Gly residues-rich tracts occupy residues 190 to 237 and 245 to 255; these read RSGG…GYGG and SGSGSGSGSGS. The region spanning 257-335 is the RRM 2 domain; that stretch reads NRLYVGNLSW…RQIRVSEAEA (79 aa).

The protein resides in the plastid. The protein localises to the chloroplast. Functionally, stabilizes specific chloroplast mRNAs. Required for normal chloroplast development under cold stress conditions by stabilizing transcripts of numerous mRNAs under these conditions. The sequence is that of 29 kDa ribonucleoprotein, chloroplastic from Arabidopsis thaliana (Mouse-ear cress).